Consider the following 654-residue polypeptide: Phosphate transport system permease protein PstA homolog (654 aa).

The next 12 membrane-spanning stretches (helical) occupy residues 22 to 42 (LAFL…TEAT), 64 to 84 (AGIW…LIIA), 113 to 133 (ILSG…LSIF), 143 to 163 (LSLL…VISL), 266 to 286 (VLYI…FFAI), 303 to 323 (ISNF…ALFV), 368 to 388 (ELIC…FVFI), 417 to 437 (LVII…IAIW), 453 to 473 (FVID…GLSF), 486 to 506 (NGTS…LFLI), 535 to 555 (IFKI…ILSI), and 613 to 633 (VVFL…LFLL). The region spanning 70 to 285 (LLVSFIVSIG…ILVSLLNFFA (216 aa)) is the ABC transmembrane type-1 1 domain. The region spanning 413 to 623 (LVNTLVIILI…VFLILLIFFS (211 aa)) is the ABC transmembrane type-1 2 domain.

Belongs to the binding-protein-dependent transport system permease family. CysTW subfamily.

The protein localises to the cell membrane. Functionally, could be part of a binding-protein-dependent transport system for phosphate; probably responsible for the translocation of the substrate across the membrane. The sequence is that of Phosphate transport system permease protein PstA homolog (pstA) from Mycoplasma genitalium (strain ATCC 33530 / DSM 19775 / NCTC 10195 / G37) (Mycoplasmoides genitalium).